The chain runs to 229 residues: Aquaporin Z (229 aa).

The next 2 helical transmembrane spans lie at 8–28 and 33–53; these read FLGT…AAGF and IGFA…AYAI. Positions 62–64 match the NPA 1 motif; the sequence is NPA. The next 3 helical transmembrane spans lie at 88 to 108, 129 to 149, and 158 to 178; these read VLGA…GAGF, LLAA…VIMG, and GFAP…SIPV. An NPA 2 motif is present at residues 184 to 186; the sequence is NPA. A helical transmembrane segment spans residues 192–212; it reads ALFVGGWAVQQLWLFWLAPII.

Belongs to the MIP/aquaporin (TC 1.A.8) family. As to quaternary structure, homotetramer.

The protein resides in the cell inner membrane. It catalyses the reaction H2O(in) = H2O(out). Channel that permits osmotically driven movement of water in both directions. It is involved in the osmoregulation and in the maintenance of cell turgor during volume expansion in rapidly growing cells. It mediates rapid entry or exit of water in response to abrupt changes in osmolarity. The sequence is that of Aquaporin Z from Chromobacterium violaceum (strain ATCC 12472 / DSM 30191 / JCM 1249 / CCUG 213 / NBRC 12614 / NCIMB 9131 / NCTC 9757 / MK).